The primary structure comprises 489 residues: NADH-quinone oxidoreductase subunit N (489 aa).

The next 14 helical transmembrane spans lie at 15–35 (APLLVVVTWATVLLLVDVFFI), 44–64 (GYLAIGGLVVAGLVGLPLWGV), 78–98 (FALTLTWIFLLIGILSITMSL), 106–126 (IEQGEYYPLIMFAVSGMILLA), 131–151 (LIVLFLGIETLSITLYILTGF), 166–186 (LVLGAFAAGFFVYGIALIFGA), 209–229 (LTLLLGGAAMVLIAFSFKVAL), 244–264 (PTPVAAFMSVGTKGGALAALV), 278–298 (WLPVLAGLTALTMVVGNLGAV), 306–326 (MLAYSSIGHAGYVMLGVMVAG), 333–353 (AFLFYMLVYALSNLGAFAVLI), 378–398 (LAVAMAIFMFSLAGVPPMAGF), 412–432 (GLPWLALVGVVTSAIAAFFYL), and 459–479 (IALAAIGTIAIGLIPAPVFAL).

The protein belongs to the complex I subunit 2 family. In terms of assembly, NDH-1 is composed of 14 different subunits. Subunits NuoA, H, J, K, L, M, N constitute the membrane sector of the complex.

It localises to the cell membrane. It catalyses the reaction a quinone + NADH + 5 H(+)(in) = a quinol + NAD(+) + 4 H(+)(out). Functionally, NDH-1 shuttles electrons from NADH, via FMN and iron-sulfur (Fe-S) centers, to quinones in the respiratory chain. The immediate electron acceptor for the enzyme in this species is believed to be ubiquinone. Couples the redox reaction to proton translocation (for every two electrons transferred, four hydrogen ions are translocated across the cytoplasmic membrane), and thus conserves the redox energy in a proton gradient. This Chloroflexus aggregans (strain MD-66 / DSM 9485) protein is NADH-quinone oxidoreductase subunit N.